Here is a 121-residue protein sequence, read N- to C-terminus: Large ribosomal subunit protein eL31 (121 aa).

It belongs to the eukaryotic ribosomal protein eL31 family.

In Perilla frutescens (Beefsteak mint), this protein is Large ribosomal subunit protein eL31 (RPL31).